We begin with the raw amino-acid sequence, 1045 residues long: Elongation factor 3 (1045 aa).

ADP is bound by residues Ile-42, His-44, and Ser-83. HEAT repeat units lie at residues 86–123 (PYVVALVPAILEQTGSKDKDVQSAANAALHAVVTAVNP), 125–162 (AVKAVLPHLTKSLSETNKWQEKVAVLSAISALVDQAKS), 166–203 (LRMTELIPVLSEAMWDTKKEVKNAATATMTKATETVEN), 171–209 (LIPVLSEAMWDTKKEVKNAATATMTKATETVENKDIERF), 205–241 (DIERFIPKLIECIANPSEVPETVHLLGATTFVAEVTP), 242–279 (ATLSIMTPLLSRGLAERETPIKRKSAVIIDNMCKLVED), and 285–323 (PFLNKLLPGLKNNFSVIADPEAREVTLRGLKTLRRVGAV). The ADP site is built by Thr-392 and His-396. ABC transporter domains lie at 426–641 (EEGE…YYEL) and 667–993 (VKVS…KKED). 4 residues coordinate ADP: Asn-703, Glu-922, Asn-925, and His-951. Residues 975-1045 (GHNWVSGQGS…AYVSDDDADF (71 aa)) form a disordered region. Basic residues predominate over residues 1020–1031 (RKKKKERMKKKK).

Belongs to the ABC transporter superfamily. ABCF family. EF3 subfamily.

The protein resides in the cytoplasm. The protein localises to the cytosol. It carries out the reaction ATP + H2O = ADP + phosphate + H(+). It functions in the pathway protein biosynthesis; polypeptide chain elongation. Functionally, ribosome-dependent ATPase that functions in cytoplasmic translation elongation. Required for the ATP-dependent release of deacylated tRNA from the ribosomal E-site during protein biosynthesis. Stimulates the eEF1A-dependent binding of aminoacyl-tRNA to the ribosomal A-site, which has reduced affinity for tRNA as long as the E-site is occupied. Assists translation termination by stimulating the release of nascent protein from the ribosome by release factors. This chain is Elongation factor 3, found in Zygosaccharomyces rouxii (strain ATCC 2623 / CBS 732 / NBRC 1130 / NCYC 568 / NRRL Y-229).